Reading from the N-terminus, the 168-residue chain is MPRSRINGNFLDKTFSIVANILLRIIPTTSGEKEAFTYYRDRMSAQSEGNYAEALQNYYEAMRLEIDPYDRSYILYNIGLIHTSNGEHMKALEYYFRALERNPFLPQAFNNMAVICHYRGEQAIQQGDSEIAGAWFDQAAEYWKQALALTPGNYIEAHNWLKITGRFD.

3 TPR repeats span residues 35–68 (AFTY…EIDP), 72–105 (SYIL…NPFL), and 120–153 (GEQA…TPGN).

This sequence belongs to the Ycf3 family.

Its subcellular location is the plastid membrane. In terms of biological role, essential for the assembly of the photosystem I (PSI) complex. May act as a chaperone-like factor to guide the assembly of the PSI subunits. The chain is Photosystem I assembly protein Ycf3 from Cuscuta reflexa (Southern Asian dodder).